The following is a 520-amino-acid chain: DDB1- and CUL4-associated factor 17 (520 aa).

Transmembrane regions (helical) follow at residues 186 to 206 and 222 to 242; these read VLLYLAVFRVLPFSLVGILEI and GILIVMYSSGLVRLYSFQTIA.

As to quaternary structure, interacts with DDB1, CUL4A and CUL4B. In terms of tissue distribution, ubiquitously expressed.

Its subcellular location is the membrane. It is found in the nucleus. It localises to the nucleolus. It participates in protein modification; protein ubiquitination. In terms of biological role, may function as a substrate receptor for CUL4-DDB1 E3 ubiquitin-protein ligase complex. This Homo sapiens (Human) protein is DDB1- and CUL4-associated factor 17 (DCAF17).